The following is a 509-amino-acid chain: Leucine-rich repeat-containing protein 14 (509 aa).

The stretch at 111–146 (RQRLRLLDMTGMQEEGLEQNPDTMSLWSRTVTLAKA) is one LRR 1; degenerate repeat. The LRR 2; degenerate repeat unit spans residues 210-234 (RLQCRDFRAEELSLRSTAGLLELLN). Residues 235–262 (PGSVRQIDLRFNNLGLSGLNVLLPHMAK) form an LRR 3; degenerate repeat. The stretch at 263 to 298 (FSHLQSLKLPYSNVDVRRLSPVMEEGLQSFASQLGQ) is one LRR 4; degenerate repeat. LRR repeat units lie at residues 299 to 323 (LGAL…LGGL), 324 to 355 (QRPL…SSLR), 356 to 374 (KLDL…PFLH), 380 to 407 (SGHL…ILCR), and 408 to 432 (CSWL…VLQN).

It belongs to the PRAME family. LRRC14 subfamily.

The protein resides in the cytoplasm. This chain is Leucine-rich repeat-containing protein 14, found in Xenopus laevis (African clawed frog).